The chain runs to 247 residues: Trypsin-2 (247 aa).

The signal sequence occupies residues 1 to 15 (MNLLLILTFVAAAVA). Positions 16–23 (APFDDDDK) are cleaved as a propeptide — activation peptide. The 221-residue stretch at 24 to 244 (IVGGYICEEN…YVDWIKDTIA (221 aa)) folds into the Peptidase S1 domain. 4 disulfides stabilise this stretch: cysteine 30–cysteine 160, cysteine 48–cysteine 64, cysteine 171–cysteine 185, and cysteine 196–cysteine 220. Residue histidine 63 is the Charge relay system of the active site. Glutamate 75, asparagine 77, valine 80, and glutamate 85 together coordinate Ca(2+). Residue aspartate 107 is the Charge relay system of the active site. Position 154 is a sulfotyrosine (tyrosine 154). Serine 200 serves as the catalytic Charge relay system.

The protein belongs to the peptidase S1 family. Requires Ca(2+) as cofactor. In terms of processing, sulfated on tyrosine. Post-translationally, sulfation at Tyr-154 increases selectivity towards basic versus apolar residues at the P2' position of inhibitors that bind in a substrate-like fashion. Although the increase in selectivity is relatively small, it may facilitate digestion of a broader range of dietary proteins. In terms of tissue distribution, expressed in Paneth cells, at the base of small intestinal crypts.

The protein resides in the secreted. The protein localises to the extracellular space. It carries out the reaction Preferential cleavage: Arg-|-Xaa, Lys-|-Xaa.. In the ileum, may be involved in defensin processing, including DEFA5. This is Trypsin-2 (PRSS2) from Homo sapiens (Human).